The chain runs to 82 residues: Cytochrome b559 subunit alpha (82 aa).

The helical transmembrane segment at 22-36 threads the bilayer; that stretch reads IIHAVTLPAIFIAGF. His-24 serves as a coordination point for heme.

The protein belongs to the PsbE/PsbF family. In terms of assembly, heterodimer of an alpha subunit and a beta subunit. PSII is composed of 1 copy each of membrane proteins PsbA, PsbB, PsbC, PsbD, PsbE, PsbF, PsbH, PsbI, PsbJ, PsbK, PsbL, PsbM, PsbT, PsbX, PsbY, Psb30/Ycf12, peripheral proteins PsbO, CyanoQ (PsbQ), PsbU, PsbV and a large number of cofactors. It forms dimeric complexes. It depends on heme b as a cofactor.

It localises to the cellular thylakoid membrane. In terms of biological role, this b-type cytochrome is tightly associated with the reaction center of photosystem II (PSII). PSII is a light-driven water:plastoquinone oxidoreductase that uses light energy to abstract electrons from H(2)O, generating O(2) and a proton gradient subsequently used for ATP formation. It consists of a core antenna complex that captures photons, and an electron transfer chain that converts photonic excitation into a charge separation. This is Cytochrome b559 subunit alpha from Prochlorococcus marinus (strain SARG / CCMP1375 / SS120).